A 648-amino-acid polypeptide reads, in one-letter code: Macrolide export ATP-binding/permease protein MacB (648 aa).

The ABC transporter domain occupies 5–243; the sequence is LELKDIRRSY…AGGTEPVVNT (239 aa). 41-48 serves as a coordination point for ATP; that stretch reads GASGSGKS. 4 helical membrane-spanning segments follow: residues 273–293, 523–543, 576–596, and 600–620; these read LLTM…VVVG, LFLT…VMNI, AVLV…LIAF, and LFLP…AFLC.

Belongs to the ABC transporter superfamily. Macrolide exporter (TC 3.A.1.122) family. In terms of assembly, homodimer. Part of the tripartite efflux system MacAB-TolC, which is composed of an inner membrane transporter, MacB, a periplasmic membrane fusion protein, MacA, and an outer membrane component, TolC. The complex forms a large protein conduit and can translocate molecules across both the inner and outer membranes. Interacts with MacA.

The protein localises to the cell inner membrane. In terms of biological role, part of the tripartite efflux system MacAB-TolC. MacB is a non-canonical ABC transporter that contains transmembrane domains (TMD), which form a pore in the inner membrane, and an ATP-binding domain (NBD), which is responsible for energy generation. Confers resistance against macrolides. The protein is Macrolide export ATP-binding/permease protein MacB of Shigella sonnei (strain Ss046).